The chain runs to 361 residues: Ribosomal RNA large subunit methyltransferase M (361 aa).

S-adenosyl-L-methionine contacts are provided by residues S187, 220–223 (CPGG), D239, D259, and D276. Residue K305 is the Proton acceptor of the active site.

It belongs to the class I-like SAM-binding methyltransferase superfamily. RNA methyltransferase RlmE family. RlmM subfamily. In terms of assembly, monomer.

It is found in the cytoplasm. The catalysed reaction is cytidine(2498) in 23S rRNA + S-adenosyl-L-methionine = 2'-O-methylcytidine(2498) in 23S rRNA + S-adenosyl-L-homocysteine + H(+). Catalyzes the 2'-O-methylation at nucleotide C2498 in 23S rRNA. This is Ribosomal RNA large subunit methyltransferase M from Shewanella baltica (strain OS223).